We begin with the raw amino-acid sequence, 368 residues long: DNA-directed RNA polymerase II subunit GRINL1A (368 aa).

Positions 29–68 (KRQERLLRNEKFICKLPDKGKKIFDSFAKLKAAIAECEEV) are important for transcription repressor activity. 3 stretches are compositionally biased toward polar residues: residues 116–131 (SSVDNIKSSQTSQNQG), 205–224 (GEQQSEENASTKNLTGLSSG), and 258–273 (QNDSSSHCQKSGSPIS). Disordered regions lie at residues 116 to 186 (SSVD…DTSS), 203 to 227 (DQGEQQSEENASTKNLTGLSSGTEK), and 255 to 282 (PFRQNDSSSHCQKSGSPISSEERRRRDK). Residues 227-298 (KKPHYMEVLE…TAARLLPLHH (72 aa)) form an interaction with Pol II region. A Phosphoserine modification is found at serine 270. Residues 299–314 (MPTQLLSIEESLALQK) form an important for transcription repressor activity region. A coiled-coil region spans residues 301–335 (TQLLSIEESLALQKQQKQNYEEMQAKLAAQKLAER). Positions 315–340 (QQKQNYEEMQAKLAAQKLAERLNIKM) are interaction with Pol II. The tract at residues 339 to 368 (KMRSYNPEGESSGRYREVRDEDDDWSSDEF) is disordered. A compositionally biased stretch (acidic residues) spans 358 to 368 (DEDDDWSSDEF).

It belongs to the GRINL1 family. In terms of assembly, component of the Pol II(G) complex, which contains the RNA polymerase II (Pol II) core complex subunits and POLR2M isoform 1. Pol II(G) appears to be an abundant form of Pol II. Post-translationally, dephosphorylated at Ser-270 by the PNUTS-PP1 complex, promoting RNA polymerase II transcription pause-release. As to expression, detected in adult an fetal brain. Detected in heart, kidney, skeletal muscle, small intestine, lung, prostate and testis.

Its subcellular location is the nucleus. Appears to be a stable component of the Pol II(G) complex form of RNA polymerase II (Pol II). Pol II synthesizes mRNA precursors and many functional non-coding RNAs and is the central component of the basal RNA polymerase II transcription machinery. May play a role in the Mediator complex-dependent regulation of transcription activation. Acts as a negative regulator of transcriptional activation; this repression is relieved by the Mediator complex, which restores Pol II(G) activator-dependent transcription to a level equivalent to that of Pol II. This is DNA-directed RNA polymerase II subunit GRINL1A (POLR2M) from Homo sapiens (Human).